The chain runs to 110 residues: Small ribosomal subunit protein uS17 (110 aa).

This sequence belongs to the universal ribosomal protein uS17 family. Part of the 30S ribosomal subunit.

Functionally, one of the primary rRNA binding proteins, it binds specifically to the 5'-end of 16S ribosomal RNA. This is Small ribosomal subunit protein uS17 from Haloquadratum walsbyi (strain DSM 16790 / HBSQ001).